A 343-amino-acid polypeptide reads, in one-letter code: Calcium/calmodulin-dependent protein kinase type 1B (343 aa).

The 256-residue stretch at 15 to 270 folds into the Protein kinase domain; it reads YEIREKLGSG…CQQALQHLWI (256 aa). ATP is bound by residues 21 to 29 and lysine 44; that span reads LGSGAFSEV. Aspartate 136 acts as the Proton acceptor in catalysis. Residues 290-311 form a calmodulin-binding region; the sequence is KNFARTHWKRAFNATSFLRHIR. Residues 314-343 are disordered; sequence GQSPEGEEASRQCMTRHSHPGLGTSQSPKW. The residue at position 338 (serine 338) is a Phosphoserine.

This sequence belongs to the protein kinase superfamily. CAMK Ser/Thr protein kinase family. CaMK subfamily. As to expression, expressed at highest levels in adult brain, and expressed in embryo. In the adult brain detected at high levels in the anterior olfactory nuclei, piriform cortex, septal nuclei, bed nuclei of the stria terminalis, hippocampal pyramidal cells, dentate granule cells, amygdala, hypothalamic nuclei, parabrachial nucleus, and nucleus of the solitary tract. Expressed at lower levels in adult ovary and heart and at very low levels in testis, lung and muscle.

The protein localises to the cytoplasm. The protein resides in the nucleus. It catalyses the reaction L-seryl-[protein] + ATP = O-phospho-L-seryl-[protein] + ADP + H(+). It carries out the reaction L-threonyl-[protein] + ATP = O-phospho-L-threonyl-[protein] + ADP + H(+). With respect to regulation, activated by Ca(2+)/calmodulin. In terms of biological role, calcium/calmodulin-dependent protein kinase belonging to a proposed calcium-triggered signaling cascade. In vitro phosphorylates CREB1 and SYN1/synapsin I. Phosphorylates and activates CAMK1. This Mus musculus (Mouse) protein is Calcium/calmodulin-dependent protein kinase type 1B (Pnck).